We begin with the raw amino-acid sequence, 338 residues long: Glutamyl-tRNA reductase (338 aa).

Substrate is bound by residues T50 to R53, S102, E107 to E109, and Q113. The active-site Nucleophile is C51. Position 181-186 (G181–N186) interacts with NADP(+).

This sequence belongs to the glutamyl-tRNA reductase family. As to quaternary structure, homodimer.

It carries out the reaction (S)-4-amino-5-oxopentanoate + tRNA(Glu) + NADP(+) = L-glutamyl-tRNA(Glu) + NADPH + H(+). Its pathway is porphyrin-containing compound metabolism; protoporphyrin-IX biosynthesis; 5-aminolevulinate from L-glutamyl-tRNA(Glu): step 1/2. In terms of biological role, catalyzes the NADPH-dependent reduction of glutamyl-tRNA(Glu) to glutamate 1-semialdehyde (GSA). The protein is Glutamyl-tRNA reductase of Chlamydia abortus (strain DSM 27085 / S26/3) (Chlamydophila abortus).